The sequence spans 235 residues: N-alpha-acetyltransferase 10 (235 aa).

Met1 is modified (N-acetylmethionine). Positions Met1 to Ala58 are interaction with NAA15. The 152-residue stretch at Met1 to Thr152 folds into the N-acetyltransferase domain. Lys136 bears the N6-acetyllysine; by autocatalysis mark. The disordered stretch occupies residues Asn178–Ser235. Residues Ser182, Ser186, and Ser205 each carry the phosphoserine modification. Positions Ala193–Ser213 are enriched in basic and acidic residues. Ser209 bears the Phosphoserine; by IKKB mark. Residues Ser213 and Ser216 each carry the phosphoserine modification.

The protein belongs to the acetyltransferase family. ARD1 subfamily. Component of the N-terminal acetyltransferase A complex (also called the NatA complex) composed of NAA10 and NAA15. Within the complex interacts with NAA15. Component of the N-terminal acetyltransferase A (NatA)/HYPK complex at least composed of NAA10, NAA15 and HYPK, which has N-terminal acetyltransferase activity. In complex with NAA15, interacts with HYPK. Component of the N-terminal acetyltransferase E (NatE) complex at least composed of NAA10, NAA15 and NAA50. Within the complex interacts with NAA15; the interaction is required for binding to NAAT50. Interacts with NAAT50. The interaction of the NatA complex with NAA50 reduces the acetylation activity of the NatA complex. Component of the N-terminal acetyltransferase E (NatE)/HYPK complex at least composed of NAA10, NAA15, NAA50 and HYPK. In complex with NAA15, interacts with HYPK; the interaction with HYPK reduces the capacity of the NatA complex to interact with NAA50. Interacts with HIF1A (via its ODD domain); the interaction increases HIF1A protein stability during normoxia, an down-regulates it when induced by hypoxia. Interacts with the ribosome. Binds to MYLK. Interacts with NAA16. Interacts (via its C-terminal domain) with TSC2, leading to its acetylation. Interacts with IKBKB. Interacts with HSPA1A and HSPA1B leading to its acetylation. Post-translationally, cleaved by caspases during apoptosis. In terms of processing, phosphorylation by IKBKB/IKKB at Ser-209 promotes its proteasome-mediated degradation. Autoacetylated at Lys-136 which stimulates its catalytic activity. As to expression, ubiquitous.

It is found in the cytoplasm. It localises to the nucleus. The enzyme catalyses N-terminal glycyl-[protein] + acetyl-CoA = N-terminal N(alpha)-acetylglycyl-[protein] + CoA + H(+). The catalysed reaction is N-terminal L-alanyl-[protein] + acetyl-CoA = N-terminal N(alpha)-acetyl-L-alanyl-[protein] + CoA + H(+). It catalyses the reaction N-terminal L-seryl-[protein] + acetyl-CoA = N-terminal N(alpha)-acetyl-L-seryl-[protein] + CoA + H(+). It carries out the reaction N-terminal L-valyl-[protein] + acetyl-CoA = N-terminal N(alpha)-acetyl-L-valyl-[protein] + CoA + H(+). The enzyme catalyses N-terminal L-cysteinyl-[protein] + acetyl-CoA = N-terminal N(alpha)-acetyl-L-cysteinyl-[protein] + CoA + H(+). The catalysed reaction is N-terminal L-threonyl-[protein] + acetyl-CoA = N-terminal N(alpha)-acetyl-L-threonyl-[protein] + CoA + H(+). Catalytic subunit of N-terminal acetyltransferase complexes which display alpha (N-terminal) acetyltransferase activity. Acetylates amino termini that are devoid of initiator methionine. The alpha (N-terminal) acetyltransferase activity may be important for vascular, hematopoietic and neuronal growth and development. Without NAA15, displays epsilon (internal) acetyltransferase activity towards HIF1A, thereby promoting its degradation. Represses MYLK kinase activity by acetylation, and thus represses tumor cell migration. Acetylates, and stabilizes TSC2, thereby repressing mTOR activity and suppressing cancer development. Acetylates HSPA1A and HSPA1B at 'Lys-77' which enhances its chaperone activity and leads to preferential binding to co-chaperone HOPX. Acetylates HIST1H4A. Acts as a negative regulator of sister chromatid cohesion during mitosis. The protein is N-alpha-acetyltransferase 10 (NAA10) of Homo sapiens (Human).